Reading from the N-terminus, the 415-residue chain is Esterase FrsA (415 aa).

Belongs to the FrsA family.

The enzyme catalyses a carboxylic ester + H2O = an alcohol + a carboxylate + H(+). Catalyzes the hydrolysis of esters. The polypeptide is Esterase FrsA (Yersinia enterocolitica serotype O:8 / biotype 1B (strain NCTC 13174 / 8081)).